Consider the following 332-residue polypeptide: Mediator of RNA polymerase II transcription subunit 3 (332 aa).

Disordered stretches follow at residues Glu-125–Thr-206 and Ser-221–Ser-242. A compositionally biased stretch (low complexity) spans Ser-132–Ser-143. Residues Ala-144–Thr-153 show a composition bias toward polar residues. 2 stretches are compositionally biased toward low complexity: residues Ser-155–Ala-166 and Pro-184–Ala-200.

The protein belongs to the Mediator complex subunit 3 family. Component of the Mediator complex.

It is found in the nucleus. In terms of biological role, component of the Mediator complex, a coactivator involved in regulated gene transcription of nearly all RNA polymerase II-dependent genes. Mediator functions as a bridge to convey information from gene-specific regulatory proteins to the basal RNA polymerase II transcription machinery. Mediator is recruited to promoters by direct interactions with regulatory proteins and serves as a scaffold for the assembly of a functional preinitiation complex with RNA polymerase II and the general transcription factors. This Eremothecium gossypii (strain ATCC 10895 / CBS 109.51 / FGSC 9923 / NRRL Y-1056) (Yeast) protein is Mediator of RNA polymerase II transcription subunit 3 (PGD1).